Consider the following 194-residue polypeptide: tRNA (pseudouridine(54)-N(1))-methyltransferase (194 aa).

An S-adenosyl-L-methionine-binding site is contributed by L125.

The protein belongs to the methyltransferase superfamily. TrmY family. In terms of assembly, homodimer.

The protein localises to the cytoplasm. The catalysed reaction is pseudouridine(54) in tRNA + S-adenosyl-L-methionine = N(1)-methylpseudouridine(54) in tRNA + S-adenosyl-L-homocysteine + H(+). Functionally, specifically catalyzes the N1-methylation of pseudouridine at position 54 (Psi54) in tRNAs. The sequence is that of tRNA (pseudouridine(54)-N(1))-methyltransferase from Methanospirillum hungatei JF-1 (strain ATCC 27890 / DSM 864 / NBRC 100397 / JF-1).